The primary structure comprises 714 residues: Elongation factor G-like protein (714 aa).

The tr-type G domain occupies Gly21–Met289. The G1 stretch occupies residues Gly30 to Thr37. Gly30–Thr37 provides a ligand contact to GTP. The G2 stretch occupies residues Gln73–Gly77. Residues Asp94–Gly97 form a G3 region. Residues Asp94 to Tyr98 and Thr148 to Asp151 each bind GTP. Residues Thr148–Asp151 form a G4 region. Residues Cys267–Ser269 are G5.

This sequence belongs to the TRAFAC class translation factor GTPase superfamily. Classic translation factor GTPase family. EF-G/EF-2 subfamily.

The protein is Elongation factor G-like protein of Mycobacterium tuberculosis (strain CDC 1551 / Oshkosh).